A 1673-amino-acid polypeptide reads, in one-letter code: VLLLMSVGTSVTQDPMVLLSVPSVILIGSDVNVLVDHAASTEDVSVVVRAEEFLTKKQLATQTITLTQLDPAIATLKLGFDIENPDKTNSASTKHHVRLVAKVESKSFNKEITAHALLSYRSGHVVVQTDKPIYTPDEKVKYRMFPMNREDVHRIPVRQSMTVDIVNADGVIVERQIKTIKATDEGIVDGTSFTIPAISKHGTWKIFARMSGAPNINSSAEFDVREYILPTFEVKINPKQRVFHINDEEFVVDITANYFNQELVSGTAYVRYFLENGDVPKLVDSSSTTLVAGEGLSILKKEKLLKLFPNAKDLLAFSLTIKTTVLSSQAAETEEAELVGIKIVESRYQITATKTSRYFKPELPYFIQVEVRNADGSPSKEVDVVAKVQVGSATINPQKMRTDSNGLTSFTVTPPNVNQLTVTVRTDERHPSNEQGELVYTAQKYASASYMHIDVTRIMRLGETLNVFLTAKTTQLNAVTHFTYMVLTRGVIVKTNRKTKESGGGPSNVRIPITPDMAPRFRFLAYYILPGGEIVADSVTVEVTELCKSQVSLSLKGRPTLEPKAMLTLDLIGEPDARVGLLAVDQAVYAVNRKHRLTQDRVWKAMETFDTGCTAEGGAGRPGVFSDAGLALITSKGLNTTDRSEIGCPKVPSRKPRQLSMLQIRREAEKYTQEFRKCCVDGLKMSPTGQGCEERLKRVTGPKECVDAFLQCCKKAEEYRKSESLGAKTVLRRNDFMELDLMNEDEVNMMAYFPQSWGWNKYKNSCKYGRHPQIRLQLPDTITTWNMQAVSISKTRGVCLADPLLLVSTKDFFIKLHLPYSVKRGEQTEIRVILYNYMEESLTILTEMDIVESICSTSKSGAKPSQKSTVKGKGAMVVSFPIVPLKIGEHHISIRSRVYGRTFGDGVQKILRVAPEGVRDIRSESRSVHVEERETFFIKNEISPDVVPNSDVLTFISVKGDELAETMVNCLDAKSISNLIQIPTGCGEQNMIKMAPTTLTLIYLDSVQEWEKIGLHRREEAIGFLKQGYSRELSYRKADHSYAAFIKRPSSTWLTAFVVKVYSLAKRVIIVDNQELCGPVEWIIKNRQNSDGSYREDGPVIHREMQGGVGGTEGHVSMTAFILIGIQQAQEYCGVSVPNYKQSMNRAVQFLASKVSDLKRMYTIAITRYALALQDPESEAAHSSWKKLENRTTFESKGHRYWKAEETSHVLRMSAISVEATAYGLLTYLRKKDYESAREIVDWLTEQRNYGGGFQSTQDTILALQAMAQYKMDSSSKELIDVQLEITSPKNNFEKKMKITEETRFVQEPHKIPPGGNITIKASGRGTFTLSIMSVFNKVAPSSKSCSTFDLKVTMTEADDGESPQGRLGWFDGKRRRRRDIGDEGGVEAVYRMNMCTRYKPRKEDLSSESGMTIIEVNMLTGFIPDKNDLIQLKESVDKYISNYEITDSVLIIYWDKVPSTEDYCFAFKIKQMLRSDMIQPVTASVYDYYSPADKCTRLYNLPGGYVELSPLCQNDLCQCVEVSCPAKKPKFDTSITVLHRQEAACVAGIDYAYVGIVDNRTEVGSFVYYTVNIQTVIKSGQDQAIQPKATRLFIVTRSCDGRLGMETPRQYLLMGRKGETKDRNDRFQYVLDASSWVEQWPVDEKCNQPNVQTFCAIKREYEFSMQIQGCSS.

An N-terminal signal peptide occupies residues 1–13; it reads VLLLMSVGTSVTQ. Residues Asn-217 and Asn-639 are each glycosylated (N-linked (GlcNAc...) asparagine). Intrachain disulfides connect Cys-678–Cys-705, Cys-679–Cys-712, and Cys-692–Cys-713. Residues 678–713 enclose the Anaphylatoxin-like domain; that stretch reads CCVDGLKMSPTGQGCEERLKRVTGPKECVDAFLQCC. A cross-link (isoglutamyl cysteine thioester (Cys-Gln)) is located at residues 986–989; it reads CGEQ. N-linked (GlcNAc...) asparagine glycosylation is found at Asn-1190, Asn-1317, and Asn-1560. Disulfide bonds link Cys-1525–Cys-1600 and Cys-1546–Cys-1671. Residues 1525–1671 form the NTR domain; the sequence is CPAKKPKFDT…YEFSMQIQGC (147 aa).

In absence of complement activation, the C3 precursor is first processed by the removal of 4 Arg residues, forming two chains, beta and alpha, linked by a disulfide bond. As to quaternary structure, complement C3b is composed of complement C3b and complement C3 beta chains that are associated via disulfide bonds. Non-enzymatic component of the C5 convertase, also named C4bC2bC3b, composed of the serine protease complement C2b (C2), complement C3b, as well as complement C4b (C4). Non-enzymatic component of the C5 convertase of the alternative complement pathways composed of the serine protease complement CFB and complement C3b. Interacts with CFP; interaction takes place together with CFB in the alternative complement system and allows the complex to become active. Interacts with CR1 (via Sushi 8 and Sushi 9 domains). Interacts with CFH. C3 precursor is first processed by the removal of 4 Arg residues, forming two chains, beta and alpha, linked by a disulfide bond. During activation of the complement systems, the alpha chain is cleaved into C3a and C3b by the C3 convertase: C3b stays linked to the beta chain, while C3a is released in the plasma. The alpha chain is cleaved by the serine protease complement C2b component of the C3 convertase to generate C3a and C3b following activation by the classical, lectin and GZMK complement systems. The alpha chain is cleaved by CFB component of the C3 convertase to generate C3a and C3b following activation by the alternative complement system. Post-translationally, C3a is further processed by carboxypeptidases to release the C-terminal arginine residue generating the acylation stimulating protein (ASP). Levels of ASP are increased in adipocytes in the postprandial period and by insulin and dietary chylomicrons. In terms of processing, complement C3b is rapidly split in two positions by factor I (CFI) and a cofactor (CFH) to form iC3b (inactivated C3b) and C3f which is released. CFI and CFH catalyze proteolytic degradation of already-deposited complement C3b. Then iC3b is slowly cleaved (possibly by CFI) to form C3c (beta chain + alpha' chain fragment 1 + alpha' chain fragment 2), C3dg and C3f. Other proteases produce other fragments such as C3d or C3g. Upon activation, the internal thioester bond reacts with carbohydrate antigens on the target surface to form amide or ester bonds, leading to covalent association with the surface of pathogens. Post-translationally, complement C3b interacts with complement C4b via a thioester linkage. In terms of processing, phosphorylated by FAM20C in the extracellular medium.

Its subcellular location is the secreted. It localises to the cell surface. Functionally, precursor of non-enzymatic components of the classical, alternative, lectin and GZMK complement pathways, which consist in a cascade of proteins that leads to phagocytosis and breakdown of pathogens and signaling that strengthens the adaptive immune system. Its function is as follows. Non-enzymatic component of C5 convertase. Generated following cleavage by C3 convertase, it covalently attaches to the surface of pathogens, where it acts as an opsonin that marks the surface of antigens for removal. Complement C3b binds covalently via its reactive thioester, to cell surface carbohydrates or immune aggregates. Together with complement C4b, it then recruits the serine protease complement C2b to form the C5 convertase, which cleaves and activate C5, the next component of the complement pathways. In the alternative complement pathway, recruits the serine protease CFB to form the C5 convertase that cleaves and activates C5. Mediator of local inflammatory process released following cleavage by C3 convertase. Acts by binding to its receptor, C3AR1, activating G protein-coupled receptor signaling, promoting the phosphorylation, ARRB2-mediated internalization and endocytosis of C3AR1. C3a anaphylatoxin stimulates the activation of immune cells such as mast cells and basophilic leukocytes to release inflammation agents, such as cytokines, chemokines and histamine, which promote inflammation development. Also acts as potent chemoattractant for the migration of macrophages and neutrophils to the inflamed tissues, resulting in neutralization of the inflammatory triggers by multiple ways, such as phagocytosis and generation of reactive oxidants. The polypeptide is Complement C3 (C3) (Lethenteron camtschaticum (Japanese lamprey)).